The chain runs to 344 residues: Aromatic amino acid aminotransferase (344 aa).

Lys-213 carries the N6-(pyridoxal phosphate)lysine modification.

The protein belongs to the class-II pyridoxal-phosphate-dependent aminotransferase family. Homodimer. Pyridoxal 5'-phosphate serves as cofactor.

The catalysed reaction is an aromatic L-alpha-amino acid + 2-oxoglutarate = an aromatic oxo-acid + L-glutamate. In terms of biological role, aminotransferase that catalyzes the conversion of aromatic amino acids and 2-oxoglutarate into corresponding aromatic oxo acids and L-glutamate. The protein is Aromatic amino acid aminotransferase of Corynebacterium diphtheriae (strain ATCC 700971 / NCTC 13129 / Biotype gravis).